The following is a 183-amino-acid chain: Glutathione-regulated potassium-efflux system ancillary protein KefG (183 aa).

The protein belongs to the NAD(P)H dehydrogenase (quinone) family. KefG subfamily. In terms of assembly, interacts with KefB.

It is found in the cell inner membrane. It carries out the reaction a quinone + NADH + H(+) = a quinol + NAD(+). It catalyses the reaction a quinone + NADPH + H(+) = a quinol + NADP(+). Its function is as follows. Regulatory subunit of a potassium efflux system that confers protection against electrophiles. Required for full activity of KefB. This is Glutathione-regulated potassium-efflux system ancillary protein KefG from Escherichia coli O6:K15:H31 (strain 536 / UPEC).